Reading from the N-terminus, the 594-residue chain is Elongation factor 4 (594 aa).

Positions 2 to 184 (KNIRNFSIIA…TIVAKVPAPE (183 aa)) constitute a tr-type G domain. GTP-binding positions include 14–19 (DHGKST) and 131–134 (NKID).

This sequence belongs to the TRAFAC class translation factor GTPase superfamily. Classic translation factor GTPase family. LepA subfamily.

Its subcellular location is the cell inner membrane. It carries out the reaction GTP + H2O = GDP + phosphate + H(+). Required for accurate and efficient protein synthesis under certain stress conditions. May act as a fidelity factor of the translation reaction, by catalyzing a one-codon backward translocation of tRNAs on improperly translocated ribosomes. Back-translocation proceeds from a post-translocation (POST) complex to a pre-translocation (PRE) complex, thus giving elongation factor G a second chance to translocate the tRNAs correctly. Binds to ribosomes in a GTP-dependent manner. The sequence is that of Elongation factor 4 from Francisella philomiragia subsp. philomiragia (strain ATCC 25017 / CCUG 19701 / FSC 153 / O#319-036).